Here is a 138-residue protein sequence, read N- to C-terminus: MRTLWILAVLLLGVEGNLVQFELLIMKVAKRSGLLSYSAYGCYCGWGGYGRPQDATDRCCFVHDCCYGKVTDCNPKTASYTYSEENGEIVCGGDDPCKKQVCECDRVAAICFRDNIPSYDNKYIQFPAKNCQEKPEPC.

Residues 1–16 (MRTLWILAVLLLGVEG) form the signal peptide. Intrachain disulfides connect C42/C131, C44/C60, C59/C111, C65/C138, C66/C104, C73/C97, and C91/C102. Ca(2+) is bound by residues Y43, G45, and G47. Residue H63 is part of the active site. Residue D64 coordinates Ca(2+). D105 is an active-site residue.

The cofactor is Ca(2+). As to expression, expressed by the venom gland.

It localises to the secreted. It carries out the reaction a 1,2-diacyl-sn-glycero-3-phosphocholine + H2O = a 1-acyl-sn-glycero-3-phosphocholine + a fatty acid + H(+). Snake venom phospholipase A2 (PLA2) that shows very low inhibition of ADP-induced platelet aggregation in platelet-rich plasma of human, rabbit and guinea pig. PLA2 catalyzes the calcium-dependent hydrolysis of the 2-acyl groups in 3-sn-phosphoglycerides. This Crotalus viridis viridis (Prairie rattlesnake) protein is Acidic phospholipase A2 Cvv-E6b.